We begin with the raw amino-acid sequence, 262 residues long: Proenkephalin-A-A (262 aa).

An N-terminal signal peptide occupies residues 1-24 (MGLEARHCCMFLLVFASLSVEIRA). 3 disulfides stabilise this stretch: C26–C48, C30–C52, and C33–C65. Propeptides lie at residues 110–131 (MDEL…LAKN), 139–177 (EYDS…GEIN), 190–201 (STDLEDETSGIQ), 211–221 (VGRPEWWEDYQ), and 229–253 (TRFT…PDME).

The protein belongs to the opioid neuropeptide precursor family. In terms of processing, the N-terminal domain contains 6 conserved cysteines thought to be involved in disulfide bonding and/or processing.

Its subcellular location is the secreted. Its function is as follows. Enkephalin neuropeptides compete with and mimic the effects of opiate drugs. They play a role in a number of physiologic functions, including pain perception and responses to stress. The protein is Proenkephalin-A-A (penk-a) of Xenopus laevis (African clawed frog).